The primary structure comprises 313 residues: Olfactory receptor 4Q3 (313 aa).

At 1–25 (MKKEQDSNVTEFVLLGLSSSWELQL) the chain is on the extracellular side. Asparagine 8 carries an N-linked (GlcNAc...) asparagine glycan. Residues 26 to 49 (FLFLLFLFFYIAIVLGNLLIVVTV) traverse the membrane as a helical segment. The Cytoplasmic portion of the chain corresponds to 50 to 58 (QAHAHLLQS). A helical transmembrane segment spans residues 59–80 (PMYYFLGHLSFIDLCLSCVTVP). The Extracellular segment spans residues 81–101 (KMLGDFLQQGKSISFSGCLAQ). Cysteine 98 and cysteine 190 are oxidised to a cystine. The chain crosses the membrane as a helical span at residues 102–121 (IYFLHFLGASEMFLLTVMAY). The Cytoplasmic portion of the chain corresponds to 122–140 (DRYVAICNPLRYLTVMNPQ). Residues 141-159 (LCLWLVLACWCGGFIHSIM) traverse the membrane as a helical segment. The Extracellular portion of the chain corresponds to 160–196 (QVILVIQLPFCGPNELDNFYCDVPQVIKLACMDTYVV). A helical membrane pass occupies residues 197–220 (EVLVIANSGLLSLVCFLVLLFSYA). Over 221-236 (IILITLRTHFCQGQNK) the chain is Cytoplasmic. Residues 237–259 (VFSTCASHLTVVSLIFVPCVFIY) form a helical membrane-spanning segment. Residues 260–270 (LRPFCSFSVDK) are Extracellular-facing. The helical transmembrane segment at 271-290 (IFSLFYTVITPMLNPLIYTL) threads the bilayer. Topologically, residues 291–313 (RNTDMKTAMKKLRIKPCGIPLPC) are cytoplasmic.

This sequence belongs to the G-protein coupled receptor 1 family.

It is found in the cell membrane. Its function is as follows. Odorant receptor. The sequence is that of Olfactory receptor 4Q3 (OR4Q3) from Homo sapiens (Human).